The following is a 50-amino-acid chain: MPQRTFLMMLIVICVTILCFVWMVRDSLCGLRLQQGNTVLVATLAYEVKR.

The chain crosses the membrane as a helical span at residues 5–25 (TFLMMLIVICVTILCFVWMVR).

It belongs to the Hok/Gef family.

It is found in the cell inner membrane. Its function is as follows. Toxic component of a type I toxin-antitoxin (TA) system. When expressed is involved in cellular Mg(2+) release and degradation of stable RNA. In Escherichia coli, this protein is Protein PndA (pndA).